Reading from the N-terminus, the 176-residue chain is ATP-dependent protease subunit HslV (176 aa).

Residue T5 is part of the active site. Positions 161, 164, and 167 each coordinate Na(+).

The protein belongs to the peptidase T1B family. HslV subfamily. A double ring-shaped homohexamer of HslV is capped on each side by a ring-shaped HslU homohexamer. The assembly of the HslU/HslV complex is dependent on binding of ATP.

The protein localises to the cytoplasm. It catalyses the reaction ATP-dependent cleavage of peptide bonds with broad specificity.. Allosterically activated by HslU binding. Functionally, protease subunit of a proteasome-like degradation complex believed to be a general protein degrading machinery. In Thermoanaerobacter pseudethanolicus (strain ATCC 33223 / 39E) (Clostridium thermohydrosulfuricum), this protein is ATP-dependent protease subunit HslV.